The sequence spans 258 residues: 4-hydroxy-tetrahydrodipicolinate reductase (258 aa).

Residues 8-13 (GVTGRM), 93-95 (GTT), and 117-120 (AANF) each bind NAD(+). His-149 functions as the Proton donor/acceptor in the catalytic mechanism. Residue His-150 participates in (S)-2,3,4,5-tetrahydrodipicolinate binding. The active-site Proton donor is Lys-153. 159 to 160 (GT) is a binding site for (S)-2,3,4,5-tetrahydrodipicolinate.

This sequence belongs to the DapB family.

Its subcellular location is the cytoplasm. It catalyses the reaction (S)-2,3,4,5-tetrahydrodipicolinate + NAD(+) + H2O = (2S,4S)-4-hydroxy-2,3,4,5-tetrahydrodipicolinate + NADH + H(+). The enzyme catalyses (S)-2,3,4,5-tetrahydrodipicolinate + NADP(+) + H2O = (2S,4S)-4-hydroxy-2,3,4,5-tetrahydrodipicolinate + NADPH + H(+). It functions in the pathway amino-acid biosynthesis; L-lysine biosynthesis via DAP pathway; (S)-tetrahydrodipicolinate from L-aspartate: step 4/4. Catalyzes the conversion of 4-hydroxy-tetrahydrodipicolinate (HTPA) to tetrahydrodipicolinate. The sequence is that of 4-hydroxy-tetrahydrodipicolinate reductase from Thermomicrobium roseum (strain ATCC 27502 / DSM 5159 / P-2).